Reading from the N-terminus, the 231-residue chain is VIGGDECDINEHPFLAFMYYSPRYFCGMTLINQEWVLTAAHCNRRFMRIXXXXHAGSVANYDEVVRXXXXXFICPNKKKNVITDKDIMLIRLDRPVKNSEHIAPLSLPSNPPSVGSVCRIMGWGAITTSEDTYPDVPHCANINLFNNTVCREAYNGLPAKTLCAGVLQGGIDTCGGDSGGPLICNGQFQGILSWGSDPCAEPRKPAFYTKVFDYLPWIQSIIAGNKTATCP.

A Peptidase S1 domain is found at Val1–Ala223. 6 disulfide bridges follow: Cys7–Cys139, Cys26–Cys42, Cys74–Cys230, Cys118–Cys184, Cys150–Cys163, and Cys174–Cys199. Active-site charge relay system residues include His41 and Asp86. Asn146 carries N-linked (GlcNAc...) asparagine glycosylation. Ser178 serves as the catalytic Charge relay system. N-linked (GlcNAc...) asparagine glycosylation occurs at Asn225.

This sequence belongs to the peptidase S1 family. Snake venom subfamily. As to quaternary structure, monomer. Glycosylated. Expressed by the venom gland.

The protein resides in the secreted. It catalyses the reaction Selective cleavage of Arg-|-Xaa bond in fibrinogen, to form fibrin, and release fibrinopeptide A. The specificity of further degradation of fibrinogen varies with species origin of the enzyme.. Inhibited by PMSF and benzamidine. Its clotting effect is strongly inhibited by antibothropic serum. Is not inhibited by heparin. Functionally, thrombin-like snake venom serine protease that cleaves Arg-Gly bonds in alpha-chain of fibrinogen (FGA). Induces temporary episodes of opisthotonos and rapid rolling around the long axis of the animal (gyroxin-like effect), when injected into the tail veins of mice (0.143 ug/g mouse). The protein is Thrombin-like enzyme leucurobin of Bothrops leucurus (Whitetail lancehead).